Consider the following 425-residue polypeptide: RNA polymerase II-associated factor 1 homolog (425 aa).

The stretch at 152–174 (KKNQQVEDMYRDKQSQIDAINKT) forms a coiled coil. The tract at residues 331 to 425 (SRKSKLTLTY…KEPTVDSDSD (95 aa)) is disordered. Basic and acidic residues-rich tracts occupy residues 344–380 (SELE…KEEG) and 393–402 (DKPQKSRSDS).

The protein belongs to the PAF1 family. Component of the PAF1 complex which consists of at least cdc-73, ctr-9, leo-1, pafo-1 and rtfo-1.

It is found in the nucleus. In terms of biological role, component of the PAF1 complex which is a multifunctional complex involved in transcription initiation via genetic interactions with TATA-binding proteins, elongation and transcription-coupled histone modification. This chain is RNA polymerase II-associated factor 1 homolog, found in Caenorhabditis elegans.